A 78-amino-acid chain; its full sequence is MSNKGQLLQDPFLNALRKEHVPVSIYLVNGIKLQGNIESFDQYVVLLRNTVTQMVYKHAISTVVPARPVNFHPDSEQS.

Positions 10 to 69 (DPFLNALRKEHVPVSIYLVNGIKLQGNIESFDQYVVLLRNTVTQMVYKHAISTVVPARPV) constitute a Sm domain.

It belongs to the Hfq family. In terms of assembly, homohexamer.

Its function is as follows. RNA chaperone that binds small regulatory RNA (sRNAs) and mRNAs to facilitate mRNA translational regulation in response to envelope stress, environmental stress and changes in metabolite concentrations. Also binds with high specificity to tRNAs. In Paraburkholderia phytofirmans (strain DSM 17436 / LMG 22146 / PsJN) (Burkholderia phytofirmans), this protein is RNA-binding protein Hfq.